The following is a 247-amino-acid chain: Cell division protein ZapD (247 aa).

The protein belongs to the ZapD family. Interacts with FtsZ.

Its subcellular location is the cytoplasm. Functionally, cell division factor that enhances FtsZ-ring assembly. Directly interacts with FtsZ and promotes bundling of FtsZ protofilaments, with a reduction in FtsZ GTPase activity. The chain is Cell division protein ZapD from Enterobacter sp. (strain 638).